The chain runs to 397 residues: Lysophospholipid transporter LplT (397 aa).

The Periplasmic segment spans residues M1 to K17. Residues A18–L38 traverse the membrane as a helical segment. Residues A39 to P52 are Cytoplasmic-facing. Residues I53 to A73 form a helical membrane-spanning segment. Residues D74–L90 are Periplasmic-facing. Residues L91 to V111 traverse the membrane as a helical segment. The Cytoplasmic portion of the chain corresponds to G112–T144. Residues I145–V165 traverse the membrane as a helical segment. Residue A166 is a topological domain, periplasmic. Residues L167 to L187 traverse the membrane as a helical segment. At A188–S226 the chain is on the cytoplasmic side. The helical transmembrane segment at L227–L247 threads the bilayer. The Periplasmic segment spans residues G248–T256. A helical transmembrane segment spans residues Y257 to V277. The Cytoplasmic segment spans residues T278–E280. Residues T281–L301 form a helical membrane-spanning segment. Residues Q302–E304 are Periplasmic-facing. A helical transmembrane segment spans residues L305–P325. Topologically, residues L326–A343 are cytoplasmic. The helical transmembrane segment at I344 to L364 threads the bilayer. Residues A365–V366 are Periplasmic-facing. Residues M367 to I387 form a helical membrane-spanning segment. Topologically, residues T388–H397 are cytoplasmic.

Belongs to the major facilitator superfamily. LplT (TC 2.A.1.42) family.

The protein localises to the cell inner membrane. Its function is as follows. Catalyzes the facilitated diffusion of 2-acyl-glycero-3-phosphoethanolamine (2-acyl-GPE) into the cell. This Shigella boydii serotype 4 (strain Sb227) protein is Lysophospholipid transporter LplT.